The primary structure comprises 293 residues: Fructose-bisphosphate aldolase (293 aa).

Serine 50 serves as a coordination point for D-glyceraldehyde 3-phosphate. The Proton donor role is filled by aspartate 85. The Zn(2+) site is built by histidine 86, aspartate 106, glutamate 136, and histidine 178. Glycine 179 is a binding site for dihydroxyacetone phosphate. Histidine 208 contributes to the Zn(2+) binding site. Residues 209–211 (GGS) and 230–233 (NVNT) contribute to the dihydroxyacetone phosphate site.

This sequence belongs to the class II fructose-bisphosphate aldolase family. It depends on Zn(2+) as a cofactor.

The enzyme catalyses beta-D-fructose 1,6-bisphosphate = D-glyceraldehyde 3-phosphate + dihydroxyacetone phosphate. The protein operates within carbohydrate degradation; glycolysis; D-glyceraldehyde 3-phosphate and glycerone phosphate from D-glucose: step 4/4. Its function is as follows. Catalyzes the aldol condensation of dihydroxyacetone phosphate (DHAP or glycerone-phosphate) with glyceraldehyde 3-phosphate (G3P) to form fructose 1,6-bisphosphate (FBP) in gluconeogenesis and the reverse reaction in glycolysis. The sequence is that of Fructose-bisphosphate aldolase (fba) from Streptococcus pyogenes serotype M3 (strain ATCC BAA-595 / MGAS315).